The primary structure comprises 425 residues: Serine--tRNA ligase (425 aa).

Position 231–233 (231–233 (TAE)) interacts with L-serine. ATP is bound at residue 262–264 (RSE). E285 is a binding site for L-serine. 349–352 (EISS) contacts ATP. Position 385 (S385) interacts with L-serine.

This sequence belongs to the class-II aminoacyl-tRNA synthetase family. Type-1 seryl-tRNA synthetase subfamily. In terms of assembly, homodimer. The tRNA molecule binds across the dimer.

It is found in the cytoplasm. It catalyses the reaction tRNA(Ser) + L-serine + ATP = L-seryl-tRNA(Ser) + AMP + diphosphate + H(+). The catalysed reaction is tRNA(Sec) + L-serine + ATP = L-seryl-tRNA(Sec) + AMP + diphosphate + H(+). Its pathway is aminoacyl-tRNA biosynthesis; selenocysteinyl-tRNA(Sec) biosynthesis; L-seryl-tRNA(Sec) from L-serine and tRNA(Sec): step 1/1. Its function is as follows. Catalyzes the attachment of serine to tRNA(Ser). Is also able to aminoacylate tRNA(Sec) with serine, to form the misacylated tRNA L-seryl-tRNA(Sec), which will be further converted into selenocysteinyl-tRNA(Sec). The chain is Serine--tRNA ligase from Desulfosudis oleivorans (strain DSM 6200 / JCM 39069 / Hxd3) (Desulfococcus oleovorans).